Here is a 328-residue protein sequence, read N- to C-terminus: tRNA uridine(34) hydroxylase (328 aa).

A Rhodanese domain is found at 130 to 224; it reads LDEDTVVLDT…YGKDPEVQGE (95 aa). The active-site Cysteine persulfide intermediate is Cys-184.

This sequence belongs to the TrhO family.

The enzyme catalyses uridine(34) in tRNA + AH2 + O2 = 5-hydroxyuridine(34) in tRNA + A + H2O. Catalyzes oxygen-dependent 5-hydroxyuridine (ho5U) modification at position 34 in tRNAs. This chain is tRNA uridine(34) hydroxylase, found in Streptococcus pyogenes serotype M6 (strain ATCC BAA-946 / MGAS10394).